A 329-amino-acid polypeptide reads, in one-letter code: Probable ABC transporter permease protein MG188 homolog (329 aa).

The next 6 membrane-spanning stretches (helical) occupy residues phenylalanine 30–leucine 50, isoleucine 96–valine 116, valine 128–leucine 148, alanine 176–isoleucine 196, leucine 234–phenylalanine 254, and asparagine 283–leucine 303. Residues leucine 88–leucine 303 enclose the ABC transmembrane type-1 domain.

Belongs to the binding-protein-dependent transport system permease family. MalFG subfamily.

It localises to the cell membrane. Functionally, probably part of a binding-protein-dependent transport system. Probably responsible for the translocation of the substrate across the membrane. This Mycoplasma pneumoniae (strain ATCC 29342 / M129 / Subtype 1) (Mycoplasmoides pneumoniae) protein is Probable ABC transporter permease protein MG188 homolog.